The sequence spans 246 residues: MPSSYDRVSKNYRQSELDKFASFTSGWWDPHGPQKPLHALNPVRLDYISKRVSLSGARVLDVGCGGGLLSEALARQGAHVTAIDLVPELIKVARLHGLESGIQVDYRIQAIEDLLAEQPAPFDAIACMEMLEHVPDPAAIVDACAHLLKPGGRLFVSTINRTLAAFMLAVVGAEYVVRLLPKGTHQYKDFIRPAELAAWLRHAGLHLEDVSGMRYEPWRNRARLTARTDINYLACAISPEASHATE.

S-adenosyl-L-methionine-binding residues include Arg-44, Gly-63, Asp-84, and Met-128.

This sequence belongs to the methyltransferase superfamily. UbiG/COQ3 family.

It carries out the reaction a 3-demethylubiquinol + S-adenosyl-L-methionine = a ubiquinol + S-adenosyl-L-homocysteine + H(+). The enzyme catalyses a 3-(all-trans-polyprenyl)benzene-1,2-diol + S-adenosyl-L-methionine = a 2-methoxy-6-(all-trans-polyprenyl)phenol + S-adenosyl-L-homocysteine + H(+). It participates in cofactor biosynthesis; ubiquinone biosynthesis. Functionally, O-methyltransferase that catalyzes the 2 O-methylation steps in the ubiquinone biosynthetic pathway. The sequence is that of Ubiquinone biosynthesis O-methyltransferase from Xylella fastidiosa (strain Temecula1 / ATCC 700964).